The sequence spans 373 residues: Flagellar P-ring protein (373 aa).

The N-terminal stretch at 1 to 30 (MTNRWSFDVKKNLVTLILTWLCLSISTAQA) is a signal peptide.

The protein belongs to the FlgI family. As to quaternary structure, the basal body constitutes a major portion of the flagellar organelle and consists of four rings (L,P,S, and M) mounted on a central rod.

It is found in the periplasm. The protein localises to the bacterial flagellum basal body. In terms of biological role, assembles around the rod to form the L-ring and probably protects the motor/basal body from shearing forces during rotation. This chain is Flagellar P-ring protein, found in Aliivibrio salmonicida (strain LFI1238) (Vibrio salmonicida (strain LFI1238)).